The following is a 199-amino-acid chain: Superoxide dismutase [Fe] (199 aa).

Fe cation contacts are provided by His-27, His-74, Asp-158, and His-162.

Belongs to the iron/manganese superoxide dismutase family. In terms of assembly, homodimer. Requires Fe cation as cofactor.

The catalysed reaction is 2 superoxide + 2 H(+) = H2O2 + O2. Its function is as follows. Destroys superoxide anion radicals which are normally produced within the cells and which are toxic to biological systems. This is Superoxide dismutase [Fe] (SODB) from Babesia bovis.